Here is a 255-residue protein sequence, read N- to C-terminus: Protein DOG1-like 2 (255 aa).

The DOG1 domain maps to 10 to 246 (EKLQKRCYHE…HDRGRVRADV (237 aa)).

The chain is Protein DOG1-like 2 from Arabidopsis thaliana (Mouse-ear cress).